The chain runs to 359 residues: 4-hydroxy-3-methylbut-2-en-1-yl diphosphate synthase (flavodoxin) (359 aa).

[4Fe-4S] cluster contacts are provided by Cys-263, Cys-266, Cys-298, and Glu-305.

This sequence belongs to the IspG family. Requires [4Fe-4S] cluster as cofactor.

The enzyme catalyses (2E)-4-hydroxy-3-methylbut-2-enyl diphosphate + oxidized [flavodoxin] + H2O + 2 H(+) = 2-C-methyl-D-erythritol 2,4-cyclic diphosphate + reduced [flavodoxin]. The protein operates within isoprenoid biosynthesis; isopentenyl diphosphate biosynthesis via DXP pathway; isopentenyl diphosphate from 1-deoxy-D-xylulose 5-phosphate: step 5/6. Converts 2C-methyl-D-erythritol 2,4-cyclodiphosphate (ME-2,4cPP) into 1-hydroxy-2-methyl-2-(E)-butenyl 4-diphosphate. This Wolinella succinogenes (strain ATCC 29543 / DSM 1740 / CCUG 13145 / JCM 31913 / LMG 7466 / NCTC 11488 / FDC 602W) (Vibrio succinogenes) protein is 4-hydroxy-3-methylbut-2-en-1-yl diphosphate synthase (flavodoxin).